Consider the following 332-residue polypeptide: Biotin synthase (332 aa).

In terms of domain architecture, Radical SAM core spans 52–282 (FPENEVEFCS…KAELRLCGGR (231 aa)). The [4Fe-4S] cluster site is built by Cys-70, Cys-74, and Cys-77. Residues Cys-114, Cys-147, Cys-207, and Arg-277 each contribute to the [2Fe-2S] cluster site.

This sequence belongs to the radical SAM superfamily. Biotin synthase family. As to quaternary structure, homodimer. [4Fe-4S] cluster is required as a cofactor. [2Fe-2S] cluster serves as cofactor.

It catalyses the reaction (4R,5S)-dethiobiotin + (sulfur carrier)-SH + 2 reduced [2Fe-2S]-[ferredoxin] + 2 S-adenosyl-L-methionine = (sulfur carrier)-H + biotin + 2 5'-deoxyadenosine + 2 L-methionine + 2 oxidized [2Fe-2S]-[ferredoxin]. It participates in cofactor biosynthesis; biotin biosynthesis; biotin from 7,8-diaminononanoate: step 2/2. Catalyzes the conversion of dethiobiotin (DTB) to biotin by the insertion of a sulfur atom into dethiobiotin via a radical-based mechanism. This Aquifex aeolicus (strain VF5) protein is Biotin synthase.